Here is a 623-residue protein sequence, read N- to C-terminus: Vacuolar-sorting receptor 1 (623 aa).

A signal peptide spans 1-22 (MKCWRLSAILFLGFMLTSLSTA). At 23–564 (RFVVEKNSLS…SKTASQAKST (542 aa)) the chain is on the lumenal side. Residues 54–163 (QYGGSMAGNV…SFGEKLKDAI (110 aa)) enclose the PA domain. N-linked (GlcNAc...) asparagine glycosylation occurs at Asn-143. 2 EGF-like domains span residues 411 to 461 (ETNE…TTCE) and 464 to 511 (GHGR…KNCE). 6 cysteine pairs are disulfide-bonded: Cys-415-Cys-433, Cys-422-Cys-442, Cys-444-Cys-460, Cys-468-Cys-488, Cys-475-Cys-496, and Cys-498-Cys-510. One can recognise an EGF-like 3; calcium-binding domain in the interval 512–554 (DIDECKDKKACQCPECSCKNTWGSYNCSCSGDLLYIKDQDTCI). Residue Asn-537 is glycosylated (N-linked (GlcNAc...) asparagine). The cysteines at positions 540 and 553 are disulfide-linked. Residues 565 to 585 (WAAFWVVLIALAMIAGGGFLV) form a helical membrane-spanning segment. The Cytoplasmic segment spans residues 586–623 (YKYRIRQYMDSEIRAIMAQYMPLDSQEEGPNHVNHQRG). The Tyrosine-based internalization motif motif lies at 605–608 (YMPL).

This sequence belongs to the VSR (BP-80) family. In terms of assembly, interacts with the N-terminal propeptide of aleurein (proaleurein).

The protein resides in the membrane. The protein localises to the golgi apparatus membrane. It is found in the cytoplasmic vesicle. Its subcellular location is the clathrin-coated vesicle membrane. It localises to the prevacuolar compartment membrane. Functionally, vacuolar-sorting receptor (VSR) involved in clathrin-coated vesicles sorting from Golgi apparatus to vacuoles. Seems to binds preferentially proteins containing a N-terminal NPIR motif. The protein is Vacuolar-sorting receptor 1 (BP80) of Pisum sativum (Garden pea).